The following is a 1553-amino-acid chain: Mediator of RNA polymerase II transcription subunit 14 (1553 aa).

2 consecutive short sequence motifs (LXXLL motif) follow at residues 55–59 (LAELL) and 472–476 (LPALL). Serine 615 is subject to Phosphoserine. Disordered regions lie at residues 699 to 723 (FATQQQQQQGAPAVAGENKPSGTSG), 1006 to 1199 (ASHE…LNRP), and 1513 to 1553 (GVGS…GGPQ). Serine 1015 carries the post-translational modification Phosphoserine. 2 stretches are compositionally biased toward low complexity: residues 1024–1039 (GGPSSVAGVSAGGSSP) and 1065–1080 (PSSSNPHTPASPHPSA). A compositionally biased stretch (gly residues) spans 1081–1090 (GAGGGSGPQG). The segment covering 1099–1108 (PPAPHMPHPS) has biased composition (pro residues). Polar residues predominate over residues 1131-1155 (GPNTLYMQSHQDSPFTAMSPANNNW). The span at 1159 to 1169 (PSMPRPSPRPG) shows a compositional bias: pro residues. The segment covering 1177 to 1193 (TGGGAGVAGGTDRGGSR) has biased composition (gly residues). Residues 1515–1534 (GSSPNPMMPMQQLPQQVGPQ) show a composition bias toward low complexity.

Belongs to the Mediator complex subunit 14 family. In terms of assembly, component of the Mediator complex, which may include CDK8, MED4, MED6, MED11, MED14, MED17, MED18, MED20, MED21, MED22, MED27, MED28, MED30 and MED31.

It localises to the nucleus. Component of the Mediator complex, a coactivator involved in the regulated transcription of nearly all RNA polymerase II-dependent genes. Mediator functions as a bridge to convey information from gene-specific regulatory proteins to the basal RNA polymerase II transcription machinery. Mediator is recruited to promoters by direct interactions with regulatory proteins and serves as a scaffold for the assembly of a functional pre-initiation complex with RNA polymerase II and the general transcription factors. Required for activated transcription of the MtnA, MtnB and MtnD genes. This chain is Mediator of RNA polymerase II transcription subunit 14 (MED14), found in Drosophila melanogaster (Fruit fly).